We begin with the raw amino-acid sequence, 368 residues long: Propane 2-monooxygenase, hydroxylase component small subunit (368 aa).

It belongs to the TmoE/XamoE family. In terms of assembly, the propane 2-monooxygenase multicomponent enzyme system is composed of an electron transfer component and a monooxygenase component interacting with the effector protein MimD. The electron transfer component is composed of a reductase (MimB), and the monooxygenase component is formed by a large subunit (MimA) and a small subunit (MimC). Requires the presence of the chaperonin-like protein MimG to ensure a productive folding, resulting of a soluble MimC, which leads to the active form of MimABCD.

It carries out the reaction propane + NADH + O2 + H(+) = propan-2-ol + NAD(+) + H2O. The enzyme catalyses acetone + NADH + O2 + H(+) = hydroxyacetone + NAD(+) + H2O. It catalyses the reaction butan-2-one + NADH + O2 + H(+) = 1-hydroxy-2-butanone + NAD(+) + H2O. The catalysed reaction is phenol + NADH + O2 + H(+) = hydroquinone + NAD(+) + H2O. In terms of biological role, component of the propane 2-monooxygenase multicomponent enzyme system which is involved in the degradation of propane via the O2-dependent hydroxylation of propane. Also involved in the degradation of acetone via the O2-dependent hydroxylation of acetone. Also able to catalyze the oxidation of phenol, methylethylketone (2-butanone), 1-propanol and 2-propanol. In Mycolicibacterium goodii (Mycobacterium goodii), this protein is Propane 2-monooxygenase, hydroxylase component small subunit.